We begin with the raw amino-acid sequence, 384 residues long: Glutamate 5-kinase (384 aa).

Lys-24 provides a ligand contact to ATP. Substrate is bound by residues Ser-64, Asp-149, and Asn-161. ATP-binding positions include 181–182 and 223–229; these read TD and TGGMRTK. The PUA domain maps to 288–370; it reads PGAILIDAGA…RDIQTLLGYT (83 aa).

It belongs to the glutamate 5-kinase family.

The protein resides in the cytoplasm. It carries out the reaction L-glutamate + ATP = L-glutamyl 5-phosphate + ADP. Its pathway is amino-acid biosynthesis; L-proline biosynthesis; L-glutamate 5-semialdehyde from L-glutamate: step 1/2. Its function is as follows. Catalyzes the transfer of a phosphate group to glutamate to form L-glutamate 5-phosphate. This chain is Glutamate 5-kinase, found in Xylella fastidiosa (strain M12).